Consider the following 334-residue polypeptide: Glutamyl-tRNA reductase (334 aa).

Substrate is bound by residues 49–52 (TCNR), Ser-107, 112–114 (EDQ), and Gln-118. The active-site Nucleophile is Cys-50. Residue 186–191 (GNGEMG) participates in NADP(+) binding.

The protein belongs to the glutamyl-tRNA reductase family. As to quaternary structure, homodimer.

It catalyses the reaction (S)-4-amino-5-oxopentanoate + tRNA(Glu) + NADP(+) = L-glutamyl-tRNA(Glu) + NADPH + H(+). The protein operates within porphyrin-containing compound metabolism; protoporphyrin-IX biosynthesis; 5-aminolevulinate from L-glutamyl-tRNA(Glu): step 1/2. Catalyzes the NADPH-dependent reduction of glutamyl-tRNA(Glu) to glutamate 1-semialdehyde (GSA). This is Glutamyl-tRNA reductase from Alkaliphilus oremlandii (strain OhILAs) (Clostridium oremlandii (strain OhILAs)).